The sequence spans 357 residues: Ribosomal RNA large subunit methyltransferase M (357 aa).

Residues serine 183, 216–219 (APGG), aspartate 235, aspartate 255, and aspartate 271 contribute to the S-adenosyl-L-methionine site. Catalysis depends on lysine 300, which acts as the Proton acceptor.

It belongs to the class I-like SAM-binding methyltransferase superfamily. RNA methyltransferase RlmE family. RlmM subfamily. Monomer.

The protein localises to the cytoplasm. The catalysed reaction is cytidine(2498) in 23S rRNA + S-adenosyl-L-methionine = 2'-O-methylcytidine(2498) in 23S rRNA + S-adenosyl-L-homocysteine + H(+). In terms of biological role, catalyzes the 2'-O-methylation at nucleotide C2498 in 23S rRNA. This is Ribosomal RNA large subunit methyltransferase M from Pseudomonas fluorescens (strain Pf0-1).